We begin with the raw amino-acid sequence, 892 residues long: MKSQEITKRWIDFFVSKGHTAVPSASLVSSDPSLLFTVAGMVPFIPYLTAREEAPYNRATSVQKCIRTGDIEEVGKTARHGTFFQMCGNFSFGDYFKEDAIKFAWELLTTSVDDGGYGLPPEKLWVTVYEEDDEAEQLWLKNTGMPAERIQRMGKADNYWSTGQPGPAGPCSEIYYDRGPSYGVEGGPIADENRYVEIWNLVFMQYQIDNVRSKVDFDITGELPKKNIDTGLGMERLAMILQDVENMYETDQVRPVIDKAAALSGKEYTSAESADDPHHTDDVRMRVVADHIRSALMLIADGVTPSNEGRGYVLRRLIRRAVRSMRLLGVEKACLPDLLPASRDAMKGVYPVVETDFDRISRIAYAEEKAFLRTIASGTARLEDAVKDSKAAGQPLSGADAFALHDTYGFPIDLTLEMAEEAGLKVDEPEFRKLMLEQRQRAQADAKGKKGSHADLSAFQELLAEGETVFTGYTELAGESKVRGILSGGRKVSQASTGEEIELVLAETPFYAEAGGQAADTGLITGDGFVVEVLDVQRPVKGLSVHKAIVREGEIGADSLVQAAVDRERRHSAEQAHTGTHIVHAALHQILGPEALQRGSYNKAGYLRFDFAWGEGLSAATRSEIEEVSNLAIRNNFQVETKVMALAEAKALGAMALFGENYGNEVRVVEIDGAWSRELCGGTHVANTSLIGSLSLLGDQSVGSGNRRVEAFVGMEAFRHLAAERALVTELTEMLKVPSGLLADRIATTLTKLKTVEKELERLRKEQLTAAAAQLVGTAKDAAGVKVIAHDAGQVSGADDLRGLALDLRTRLGSEAAAVAVAGVSNDRPVILVATNEAARAAGVKAGALVRLAAGILGGGGGGKDDVAQGGGTDAAKVPAALTAVVDAITRR.

Zn(2+) is bound by residues His-577, His-581, Cys-680, and His-684.

This sequence belongs to the class-II aminoacyl-tRNA synthetase family. It depends on Zn(2+) as a cofactor.

The protein localises to the cytoplasm. The enzyme catalyses tRNA(Ala) + L-alanine + ATP = L-alanyl-tRNA(Ala) + AMP + diphosphate. In terms of biological role, catalyzes the attachment of alanine to tRNA(Ala) in a two-step reaction: alanine is first activated by ATP to form Ala-AMP and then transferred to the acceptor end of tRNA(Ala). Also edits incorrectly charged Ser-tRNA(Ala) and Gly-tRNA(Ala) via its editing domain. This Arthrobacter sp. (strain FB24) protein is Alanine--tRNA ligase.